The chain runs to 348 residues: UDP-glucose 4-epimerase (348 aa).

T125 is a binding site for substrate. Residue Y149 is the Proton acceptor of the active site.

It belongs to the NAD(P)-dependent epimerase/dehydratase family. NAD(+) is required as a cofactor.

It carries out the reaction UDP-alpha-D-glucose = UDP-alpha-D-galactose. The protein operates within carbohydrate metabolism; galactose metabolism. It functions in the pathway glycan metabolism; exopolysaccharide biosynthesis. In Azospirillum brasilense, this protein is UDP-glucose 4-epimerase (exoB).